The primary structure comprises 365 residues: Probable dual-specificity RNA methyltransferase RlmN (365 aa).

Glutamate 108 acts as the Proton acceptor in catalysis. The region spanning 114 to 352 (YPDRNTVCIS…SCTVRDTRGR (239 aa)) is the Radical SAM core domain. Cysteine 121 and cysteine 358 are oxidised to a cystine. Cysteine 128, cysteine 132, and cysteine 135 together coordinate [4Fe-4S] cluster. Residues 179 to 180 (GE), serine 213, 236 to 238 (SLH), and asparagine 315 each bind S-adenosyl-L-methionine. The S-methylcysteine intermediate role is filled by cysteine 358.

It belongs to the radical SAM superfamily. RlmN family. The cofactor is [4Fe-4S] cluster.

The protein resides in the cytoplasm. The catalysed reaction is adenosine(2503) in 23S rRNA + 2 reduced [2Fe-2S]-[ferredoxin] + 2 S-adenosyl-L-methionine = 2-methyladenosine(2503) in 23S rRNA + 5'-deoxyadenosine + L-methionine + 2 oxidized [2Fe-2S]-[ferredoxin] + S-adenosyl-L-homocysteine. It carries out the reaction adenosine(37) in tRNA + 2 reduced [2Fe-2S]-[ferredoxin] + 2 S-adenosyl-L-methionine = 2-methyladenosine(37) in tRNA + 5'-deoxyadenosine + L-methionine + 2 oxidized [2Fe-2S]-[ferredoxin] + S-adenosyl-L-homocysteine. Functionally, specifically methylates position 2 of adenine 2503 in 23S rRNA and position 2 of adenine 37 in tRNAs. In Mycolicibacterium vanbaalenii (strain DSM 7251 / JCM 13017 / BCRC 16820 / KCTC 9966 / NRRL B-24157 / PYR-1) (Mycobacterium vanbaalenii), this protein is Probable dual-specificity RNA methyltransferase RlmN.